Consider the following 494-residue polypeptide: Acetyl-coenzyme A carboxylase carboxyl transferase subunit beta, chloroplastic (494 aa).

Residues 230 to 494 (LWVQCENCYG…LHGFFPLNQN (265 aa)) enclose the CoA carboxyltransferase N-terminal domain. Zn(2+) contacts are provided by C234, C237, C253, and C256. The C4-type zinc finger occupies 234–256 (CENCYGLNYKKFFRSKMNICEQC).

Belongs to the AccD/PCCB family. As to quaternary structure, acetyl-CoA carboxylase is a heterohexamer composed of biotin carboxyl carrier protein, biotin carboxylase and 2 subunits each of ACCase subunit alpha and ACCase plastid-coded subunit beta (accD). Zn(2+) is required as a cofactor.

It is found in the plastid. It localises to the chloroplast stroma. It carries out the reaction N(6)-carboxybiotinyl-L-lysyl-[protein] + acetyl-CoA = N(6)-biotinyl-L-lysyl-[protein] + malonyl-CoA. Its pathway is lipid metabolism; malonyl-CoA biosynthesis; malonyl-CoA from acetyl-CoA: step 1/1. Component of the acetyl coenzyme A carboxylase (ACC) complex. Biotin carboxylase (BC) catalyzes the carboxylation of biotin on its carrier protein (BCCP) and then the CO(2) group is transferred by the transcarboxylase to acetyl-CoA to form malonyl-CoA. The chain is Acetyl-coenzyme A carboxylase carboxyl transferase subunit beta, chloroplastic from Drimys granadensis.